The chain runs to 307 residues: 4-hydroxy-3-methylbut-2-enyl diphosphate reductase (307 aa).

[4Fe-4S] cluster is bound at residue Cys13. (2E)-4-hydroxy-3-methylbut-2-enyl diphosphate is bound by residues His42 and His75. The dimethylallyl diphosphate site is built by His42 and His75. Positions 42 and 75 each coordinate isopentenyl diphosphate. Cys97 serves as a coordination point for [4Fe-4S] cluster. Residue His125 participates in (2E)-4-hydroxy-3-methylbut-2-enyl diphosphate binding. His125 lines the dimethylallyl diphosphate pocket. His125 contributes to the isopentenyl diphosphate binding site. The Proton donor role is filled by Glu127. Thr165 is a binding site for (2E)-4-hydroxy-3-methylbut-2-enyl diphosphate. Cys195 lines the [4Fe-4S] cluster pocket. Residues Ser223, Ser224, Asn225, and Ser267 each contribute to the (2E)-4-hydroxy-3-methylbut-2-enyl diphosphate site. The dimethylallyl diphosphate site is built by Ser223, Ser224, Asn225, and Ser267. Positions 223, 224, 225, and 267 each coordinate isopentenyl diphosphate.

Belongs to the IspH family. [4Fe-4S] cluster serves as cofactor.

It carries out the reaction isopentenyl diphosphate + 2 oxidized [2Fe-2S]-[ferredoxin] + H2O = (2E)-4-hydroxy-3-methylbut-2-enyl diphosphate + 2 reduced [2Fe-2S]-[ferredoxin] + 2 H(+). The enzyme catalyses dimethylallyl diphosphate + 2 oxidized [2Fe-2S]-[ferredoxin] + H2O = (2E)-4-hydroxy-3-methylbut-2-enyl diphosphate + 2 reduced [2Fe-2S]-[ferredoxin] + 2 H(+). It functions in the pathway isoprenoid biosynthesis; dimethylallyl diphosphate biosynthesis; dimethylallyl diphosphate from (2E)-4-hydroxy-3-methylbutenyl diphosphate: step 1/1. The protein operates within isoprenoid biosynthesis; isopentenyl diphosphate biosynthesis via DXP pathway; isopentenyl diphosphate from 1-deoxy-D-xylulose 5-phosphate: step 6/6. In terms of biological role, catalyzes the conversion of 1-hydroxy-2-methyl-2-(E)-butenyl 4-diphosphate (HMBPP) into a mixture of isopentenyl diphosphate (IPP) and dimethylallyl diphosphate (DMAPP). Acts in the terminal step of the DOXP/MEP pathway for isoprenoid precursor biosynthesis. This Chlamydia trachomatis serovar L2b (strain UCH-1/proctitis) protein is 4-hydroxy-3-methylbut-2-enyl diphosphate reductase.